Reading from the N-terminus, the 323-residue chain is Ficolin-2 (323 aa).

An N-terminal signal peptide occupies residues 1 to 26 (MDTRGVAAAMRPLVLLVAFLCTAAPA). The 51-residue stretch at 52 to 102 (GLPGAAGPKGEAGASGPKGGQGPPGAPGEPGPPGPKGDRGEKGEPGPKGES) folds into the Collagen-like domain. The segment covering 55 to 66 (GAAGPKGEAGAS) has biased composition (low complexity). The disordered stretch occupies residues 55–107 (GAAGPKGEAGASGPKGGQGPPGAPGEPGPPGPKGDRGEKGEPGPKGESWETEQ). The segment covering 75–86 (PGAPGEPGPPGP) has biased composition (pro residues). A compositionally biased stretch (basic and acidic residues) spans 87–102 (KGDRGEKGEPGPKGES). The Fibrinogen C-terminal domain maps to 106–323 (EQCLTGPRTC…KVSEMKFRAT (218 aa)). 2 disulfides stabilise this stretch: cysteine 108/cysteine 136 and cysteine 115/cysteine 143. N-linked (GlcNAc...) asparagine glycosylation occurs at asparagine 249. 3 residues coordinate Ca(2+): aspartate 259, aspartate 261, and serine 265. Cysteines 267 and 280 form a disulfide. Residues asparagine 302 and asparagine 310 are each glycosylated (N-linked (GlcNAc...) asparagine).

This sequence belongs to the ficolin lectin family. In terms of assembly, homotrimer. Interacts with elastin. Interacts with MASP1 and MASP2. Mainly expressed in skeletal muscle.

Its subcellular location is the secreted. May function in innate immunity through activation of the lectin complement pathway. Calcium-dependent and GlcNAc-binding lectin. In Sus scrofa (Pig), this protein is Ficolin-2 (FCN2).